Here is a 341-residue protein sequence, read N- to C-terminus: UDP-3-O-acylglucosamine N-acyltransferase 2 (341 aa).

Residue His254 is the Proton acceptor of the active site.

It belongs to the transferase hexapeptide repeat family. LpxD subfamily. Homotrimer.

It carries out the reaction a UDP-3-O-[(3R)-3-hydroxyacyl]-alpha-D-glucosamine + a (3R)-hydroxyacyl-[ACP] = a UDP-2-N,3-O-bis[(3R)-3-hydroxyacyl]-alpha-D-glucosamine + holo-[ACP] + H(+). It functions in the pathway bacterial outer membrane biogenesis; LPS lipid A biosynthesis. Catalyzes the N-acylation of UDP-3-O-acylglucosamine using 3-hydroxyacyl-ACP as the acyl donor. Is involved in the biosynthesis of lipid A, a phosphorylated glycolipid that anchors the lipopolysaccharide to the outer membrane of the cell. In Nitrobacter winogradskyi (strain ATCC 25391 / DSM 10237 / CIP 104748 / NCIMB 11846 / Nb-255), this protein is UDP-3-O-acylglucosamine N-acyltransferase 2.